The primary structure comprises 255 residues: Ribonuclease HII (255 aa).

The RNase H type-2 domain maps to 72 to 255 (NYIAGVDEAG…RLSFVKNFVE (184 aa)). Positions 78, 79, and 170 each coordinate a divalent metal cation.

It belongs to the RNase HII family. It depends on Mn(2+) as a cofactor. Requires Mg(2+) as cofactor.

Its subcellular location is the cytoplasm. The enzyme catalyses Endonucleolytic cleavage to 5'-phosphomonoester.. Endonuclease that specifically degrades the RNA of RNA-DNA hybrids. The protein is Ribonuclease HII of Ruminiclostridium cellulolyticum (strain ATCC 35319 / DSM 5812 / JCM 6584 / H10) (Clostridium cellulolyticum).